The primary structure comprises 492 residues: GTPase Obg (492 aa).

The 158-residue stretch at 2-159 (PRFVDRVVIH…RELTLELKTV (158 aa)) folds into the Obg domain. The OBG-type G domain occupies 160–340 (ADVGLIGFPS…LIFGLWQMIS (181 aa)). GTP-binding positions include 166-173 (GFPSAGKS), 191-195 (FTTLV), 212-215 (DVPG), 292-295 (NKID), and 321-323 (STV). 2 residues coordinate Mg(2+): Ser173 and Thr193. The region spanning 358 to 438 (PVPVDDSGFR…IGDMTFDWEP (81 aa)) is the OCT domain. The disordered stretch occupies residues 441–492 (PAGQQVVLSGRGTDARLERTERVGAAERKAARRQRRTGDDAERGTTERGENT). 2 stretches are compositionally biased toward basic and acidic residues: residues 453–469 (TDAR…AERK) and 476–492 (RTGD…GENT).

The protein belongs to the TRAFAC class OBG-HflX-like GTPase superfamily. OBG GTPase family. As to quaternary structure, monomer. It depends on Mg(2+) as a cofactor.

The protein resides in the cytoplasm. In terms of biological role, an essential GTPase which binds GTP, GDP and possibly (p)ppGpp with moderate affinity, with high nucleotide exchange rates and a fairly low GTP hydrolysis rate. Plays a role in control of the cell cycle, stress response, ribosome biogenesis and in those bacteria that undergo differentiation, in morphogenesis control. The sequence is that of GTPase Obg from Mycolicibacterium paratuberculosis (strain ATCC BAA-968 / K-10) (Mycobacterium paratuberculosis).